The chain runs to 338 residues: Phospho-2-dehydro-3-deoxyheptonate aldolase (338 aa).

The protein belongs to the class-I DAHP synthase family. In terms of assembly, homotetramer. Requires a divalent metal cation as cofactor.

The enzyme catalyses D-erythrose 4-phosphate + phosphoenolpyruvate + H2O = 7-phospho-2-dehydro-3-deoxy-D-arabino-heptonate + phosphate. Its pathway is metabolic intermediate biosynthesis; chorismate biosynthesis; chorismate from D-erythrose 4-phosphate and phosphoenolpyruvate: step 1/7. With respect to regulation, inhibited by L-phenylalanine and L-tyrosine. In terms of biological role, catalyzes the condensation of phosphoenolpyruvate (PEP) and D-erythrose-4-phosphate (E4P) giving rise to 3-deoxy-D-arabino-heptulosonate-7-phosphate (DAHP). This is Phospho-2-dehydro-3-deoxyheptonate aldolase (aroF) from Thermotoga maritima (strain ATCC 43589 / DSM 3109 / JCM 10099 / NBRC 100826 / MSB8).